Here is a 111-residue protein sequence, read N- to C-terminus: UPF0375 protein ule-4 (111 aa).

An N-terminal signal peptide occupies residues 1-18 (MNSRLVLLLAVSVALVSA). Residues N23 and N58 are each glycosylated (N-linked (GlcNAc...) asparagine).

The protein belongs to the UPF0375 family.

Its subcellular location is the secreted. This chain is UPF0375 protein ule-4, found in Caenorhabditis elegans.